We begin with the raw amino-acid sequence, 82 residues long: Small ribosomal subunit protein uS17 (82 aa).

The protein belongs to the universal ribosomal protein uS17 family. Part of the 30S ribosomal subunit.

Functionally, one of the primary rRNA binding proteins, it binds specifically to the 5'-end of 16S ribosomal RNA. This chain is Small ribosomal subunit protein uS17, found in Sulfurimonas denitrificans (strain ATCC 33889 / DSM 1251) (Thiomicrospira denitrificans (strain ATCC 33889 / DSM 1251)).